A 286-amino-acid chain; its full sequence is Lipoyl synthase (286 aa).

7 residues coordinate [4Fe-4S] cluster: C34, C39, C45, C60, C64, C67, and S271. Positions 46-260 (WESGTATFMI…EESAYSIGFS (215 aa)) constitute a Radical SAM core domain.

Belongs to the radical SAM superfamily. Lipoyl synthase family. It depends on [4Fe-4S] cluster as a cofactor.

The protein resides in the cytoplasm. It catalyses the reaction [[Fe-S] cluster scaffold protein carrying a second [4Fe-4S](2+) cluster] + N(6)-octanoyl-L-lysyl-[protein] + 2 oxidized [2Fe-2S]-[ferredoxin] + 2 S-adenosyl-L-methionine + 4 H(+) = [[Fe-S] cluster scaffold protein] + N(6)-[(R)-dihydrolipoyl]-L-lysyl-[protein] + 4 Fe(3+) + 2 hydrogen sulfide + 2 5'-deoxyadenosine + 2 L-methionine + 2 reduced [2Fe-2S]-[ferredoxin]. It participates in protein modification; protein lipoylation via endogenous pathway; protein N(6)-(lipoyl)lysine from octanoyl-[acyl-carrier-protein]: step 2/2. Catalyzes the radical-mediated insertion of two sulfur atoms into the C-6 and C-8 positions of the octanoyl moiety bound to the lipoyl domains of lipoate-dependent enzymes, thereby converting the octanoylated domains into lipoylated derivatives. This chain is Lipoyl synthase, found in Picrophilus torridus (strain ATCC 700027 / DSM 9790 / JCM 10055 / NBRC 100828 / KAW 2/3).